We begin with the raw amino-acid sequence, 140 residues long: Transcription antitermination protein NusB (140 aa).

Belongs to the NusB family.

Functionally, involved in transcription antitermination. Required for transcription of ribosomal RNA (rRNA) genes. Binds specifically to the boxA antiterminator sequence of the ribosomal RNA (rrn) operons. The sequence is that of Transcription antitermination protein NusB from Streptococcus pneumoniae (strain JJA).